We begin with the raw amino-acid sequence, 430 residues long: Enolase (430 aa).

Residue glutamine 165 coordinates (2R)-2-phosphoglycerate. Catalysis depends on glutamate 207, which acts as the Proton donor. Positions 244, 287, and 314 each coordinate Mg(2+). (2R)-2-phosphoglycerate contacts are provided by lysine 339, arginine 368, serine 369, and lysine 390. The Proton acceptor role is filled by lysine 339.

Belongs to the enolase family. Component of the RNA degradosome, a multiprotein complex involved in RNA processing and mRNA degradation. It depends on Mg(2+) as a cofactor.

The protein localises to the cytoplasm. Its subcellular location is the secreted. It localises to the cell surface. It carries out the reaction (2R)-2-phosphoglycerate = phosphoenolpyruvate + H2O. Its pathway is carbohydrate degradation; glycolysis; pyruvate from D-glyceraldehyde 3-phosphate: step 4/5. In terms of biological role, catalyzes the reversible conversion of 2-phosphoglycerate (2-PG) into phosphoenolpyruvate (PEP). It is essential for the degradation of carbohydrates via glycolysis. The sequence is that of Enolase from Xanthomonas axonopodis pv. citri (strain 306).